The following is a 367-amino-acid chain: Dihydroxyacetone phosphate transaminase Cj1437c (367 aa).

The residue at position 219 (Lys219) is an N6-(pyridoxal phosphate)lysine.

It belongs to the class-II pyridoxal-phosphate-dependent aminotransferase family. The cofactor is pyridoxal 5'-phosphate.

The enzyme catalyses dihydroxyacetone phosphate + L-glutamate = (S)-serinol phosphate + 2-oxoglutarate. The protein operates within capsule biogenesis; capsule polysaccharide biosynthesis. In terms of biological role, pyridoxal phosphate (PLP)-dependent transaminase involved in the biosynthesis of amidated D-glucuronic acid structures found on the capsular polysaccharide (CPS) of C.jejuni. Catalyzes the transamination of dihydroxyacetone phosphate (DHAP) to (S)-serinol phosphate in the presence of L-glutamate. Less active with L-aspartate. No activity with dihydroxyacetone or L-alanine. The polypeptide is Dihydroxyacetone phosphate transaminase Cj1437c (Campylobacter jejuni subsp. jejuni serotype O:2 (strain ATCC 700819 / NCTC 11168)).